A 442-amino-acid chain; its full sequence is 3-oxoacyl-[acyl-carrier-protein] synthase homolog (442 aa).

Residues 2–438 (SRRVVITGLG…GVNTSLLFKK (437 aa)) form the Ketosynthase family 3 (KS3) domain. Active-site for beta-ketoacyl synthase activity residues include C187, H322, and H362.

It belongs to the thiolase-like superfamily. Beta-ketoacyl-ACP synthases family.

Its subcellular location is the mitochondrion. It catalyses the reaction a fatty acyl-[ACP] + malonyl-[ACP] + H(+) = a 3-oxoacyl-[ACP] + holo-[ACP] + CO2. Functionally, possibly involved in the synthesis of a specialized molecule, probably related to a fatty acid, which is essential for mitochondrial respiration. Is essential for oxygen uptake and the presence of cytochromes A and B. The sequence is that of 3-oxoacyl-[acyl-carrier-protein] synthase homolog (CEM1) from Saccharomyces cerevisiae (strain ATCC 204508 / S288c) (Baker's yeast).